A 347-amino-acid chain; its full sequence is GMP reductase (347 aa).

Residue 108 to 131 participates in NADP(+) binding; it reads ADFEKTKQILDLNSALNFVCIDVA. K(+) contacts are provided by Gly-181 and Gly-183. Residue Cys-186 is the Thioimidate intermediate of the active site. 216 to 239 contributes to the NADP(+) binding site; it reads IVSDGGCTTPGDVAKAFGGGADFV.

It belongs to the IMPDH/GMPR family. GuaC type 1 subfamily. Homotetramer.

The catalysed reaction is IMP + NH4(+) + NADP(+) = GMP + NADPH + 2 H(+). Its function is as follows. Catalyzes the irreversible NADPH-dependent deamination of GMP to IMP. It functions in the conversion of nucleobase, nucleoside and nucleotide derivatives of G to A nucleotides, and in maintaining the intracellular balance of A and G nucleotides. This chain is GMP reductase, found in Escherichia coli O81 (strain ED1a).